A 277-amino-acid polypeptide reads, in one-letter code: Sulfate transport system permease protein CysT (277 aa).

Helical transmembrane passes span 17–37, 64–84, 99–119, 136–156, 188–205, 215–235, and 243–263; these read LGTSLLFVCLILLLPLSALVM, LLAAFVASIFNGVFGLLMAWI, LMDLPFALPTAVAGLTLASLF, VTYTWLGIAVAMAFTSIPFVV, VVLPELSPALIAGVALSF, VIFIAGNIAWKTEVTSLMIFV, and PAASAIASVILAASLLLLFSI. The 204-residue stretch at 60–263 folds into the ABC transmembrane type-1 domain; the sequence is YKVTLLAAFV…AASLLLLFSI (204 aa).

Belongs to the binding-protein-dependent transport system permease family. CysTW subfamily. The complex is composed of two ATP-binding proteins (CysA), two transmembrane proteins (CysT and CysW) and a solute-binding protein (CysP).

The protein localises to the cell inner membrane. Functionally, part of the ABC transporter complex CysAWTP (TC 3.A.1.6.1) involved in sulfate/thiosulfate import. Probably responsible for the translocation of the substrate across the membrane. This chain is Sulfate transport system permease protein CysT (cysU), found in Salmonella typhimurium (strain LT2 / SGSC1412 / ATCC 700720).